The following is a 108-amino-acid chain: DNA-binding protein HBbu (108 aa).

This sequence belongs to the bacterial histone-like protein family.

Histone-like DNA-binding protein which is capable of wrapping DNA to stabilize it, and thus to prevent its denaturation under extreme environmental conditions. This chain is DNA-binding protein HBbu (hbb), found in Borreliella japonica (Borrelia japonica).